Here is a 429-residue protein sequence, read N- to C-terminus: Serine hydroxymethyltransferase (429 aa).

120-122 (GHI) serves as a coordination point for (6S)-5,6,7,8-tetrahydrofolate. N6-(pyridoxal phosphate)lysine is present on K226.

The protein belongs to the SHMT family. Homodimer. Requires pyridoxal 5'-phosphate as cofactor.

The protein localises to the cytoplasm. It catalyses the reaction 5,10-methylenetetrahydromethanopterin + glycine + H2O = 5,6,7,8-tetrahydromethanopterin + L-serine. It carries out the reaction L-allo-threonine = acetaldehyde + glycine. The protein operates within amino-acid biosynthesis; glycine biosynthesis; glycine from L-serine: step 1/1. Catalyzes the reversible interconversion of serine and glycine with tetrahydromethanopterin (H4MPT) serving as the one-carbon carrier. The use of tetrahydrofolate (THF or H4PteGlu) as the pteridine substrate is 450-fold less efficient than that of H4MPT. Also exhibits a pteridine-independent aldolase activity toward beta-hydroxyamino acids, producing glycine and aldehydes, via a retro-aldol mechanism. Thus, is able to catalyze the cleavage of L-allo-threonine and L-threo-beta-phenylserine. The sequence is that of Serine hydroxymethyltransferase from Methanocaldococcus jannaschii (strain ATCC 43067 / DSM 2661 / JAL-1 / JCM 10045 / NBRC 100440) (Methanococcus jannaschii).